The primary structure comprises 79 residues: Acyl carrier protein (79 aa).

One can recognise a Carrier domain in the interval serine 2–valine 77. At serine 37 the chain carries O-(pantetheine 4'-phosphoryl)serine.

Belongs to the acyl carrier protein (ACP) family. Post-translationally, 4'-phosphopantetheine is transferred from CoA to a specific serine of apo-ACP by AcpS. This modification is essential for activity because fatty acids are bound in thioester linkage to the sulfhydryl of the prosthetic group.

Its subcellular location is the cytoplasm. The protein operates within lipid metabolism; fatty acid biosynthesis. Carrier of the growing fatty acid chain in fatty acid biosynthesis. The protein is Acyl carrier protein of Xanthomonas axonopodis pv. citri (strain 306).